A 474-amino-acid chain; its full sequence is Phenolic acid decarboxylase (474 aa).

The Mn(2+) site is built by N161, H182, and E224. Prenylated FMN contacts are provided by residues 161 to 166 (NVGTYR) and 181 to 182 (MH). The Proton donor role is filled by E273.

This sequence belongs to the UbiD family. YclC subfamily. Prenylated FMN serves as cofactor. The cofactor is Mn(2+).

The catalysed reaction is vanillate + H(+) = guaiacol + CO2. Its function is as follows. Involved in the non-oxidative decarboxylation and detoxification of phenolic derivatives under both aerobic and anaerobic conditions. Phenolic acid decarboxylase that catalyzes the reversible decarboxylation of vanillate. The protein is Phenolic acid decarboxylase of Streptomyces sp. (strain D7).